An 86-amino-acid chain; its full sequence is Toxin TdNa7 (86 aa).

The signal sequence occupies residues 1 to 20 (MTRFVLFLSCFFLIGMVVEC). The LCN-type CS-alpha/beta domain occupies 21–83 (KDGYLMGPDG…TWERATNTCG (63 aa)). 4 disulfide bridges follow: Cys31/Cys82, Cys35/Cys57, Cys43/Cys63, and Cys47/Cys65. A Lysine amide modification is found at Lys84.

This sequence belongs to the long (4 C-C) scorpion toxin superfamily. Sodium channel inhibitor family. Beta subfamily. In terms of tissue distribution, expressed by the venom gland.

The protein resides in the secreted. Functionally, beta toxins bind voltage-independently at site-4 of sodium channels (Nav) and shift the voltage of activation toward more negative potentials thereby affecting sodium channel activation and promoting spontaneous and repetitive firing. In Tityus discrepans (Venezuelan scorpion), this protein is Toxin TdNa7.